Here is a 279-residue protein sequence, read N- to C-terminus: Large ribosomal subunit protein uL2 (279 aa).

Disordered stretches follow at residues 1–43 and 207–279; these read MGIK…TAGR and KAGR…PGKH. A compositionally biased stretch (polar residues) spans 8 to 22; it reads PTTNGRRNMTASDFS. Positions 23-33 are enriched in basic and acidic residues; it reads EITKTKPEKSL. A compositionally biased stretch (polar residues) spans 34-43; it reads LDSQSHTAGR. Composition is skewed to basic residues over residues 209-219 and 254-279; these read GRTRWQGKRPT and TLGK…PGKH.

Belongs to the universal ribosomal protein uL2 family. Part of the 50S ribosomal subunit. Forms a bridge to the 30S subunit in the 70S ribosome.

In terms of biological role, one of the primary rRNA binding proteins. Required for association of the 30S and 50S subunits to form the 70S ribosome, for tRNA binding and peptide bond formation. It has been suggested to have peptidyltransferase activity; this is somewhat controversial. Makes several contacts with the 16S rRNA in the 70S ribosome. The protein is Large ribosomal subunit protein uL2 of Lactiplantibacillus plantarum (strain ATCC BAA-793 / NCIMB 8826 / WCFS1) (Lactobacillus plantarum).